The sequence spans 941 residues: Cilia- and flagella-associated protein 69 (941 aa).

The protein resides in the cell projection. The protein localises to the cilium. It localises to the flagellum. Cilium- and flagellum-associated protein. In the olfactory epithelium, regulates the speed of activation and termination of the odor response and thus contributes to the robustness of olfactory transduction pathways. Required for sperm flagellum assembly and stability. The sequence is that of Cilia- and flagella-associated protein 69 from Callithrix jacchus (White-tufted-ear marmoset).